Here is an 813-residue protein sequence, read N- to C-terminus: Acyl-homoserine lactone acylase QuiP (813 aa).

The N-terminal stretch at 1-26 (MAAPAFPPFRLRFATAATLLGMLGLA) is a signal peptide. The Nucleophile role is filled by serine 262.

Belongs to the peptidase S45 family. Heterodimer of an alpha subunit and a beta subunit processed from the same precursor.

Its subcellular location is the periplasm. It catalyses the reaction an N-acyl-L-homoserine lactone + H2O = L-homoserine lactone + a carboxylate. Its function is as follows. Catalyzes the deacylation of acyl-homoserine lactone (AHL or acyl-HSL), releasing homoserine lactone (HSL) and the corresponding fatty acid. Possesses a specificity for the degradation of long-chain acyl-HSLs (side chains of seven or more carbons in length). This is Acyl-homoserine lactone acylase QuiP (quiP) from Pseudomonas putida (strain ATCC 47054 / DSM 6125 / CFBP 8728 / NCIMB 11950 / KT2440).